The following is an 873-amino-acid chain: Protein SEY1 (873 aa).

Positions 1–20 are disordered; sequence MVANGHFAGSADGQHSSSYE. At 1 to 749 the chain is on the cytoplasmic side; the sequence is MVANGHFAGS…KRSAIGGITQ (749 aa). The region spanning 49 to 307 is the GB1/RHD3-type G domain; it reads GFNYHLISVF…IPADGFAVYA (259 aa). 59 to 66 lines the GTP pocket; that stretch reads GSQSTGKS. A coiled-coil region spans residues 482–506; that stretch reads SNYQQELSLYQKDLERTSGQLRRDE. The segment at 677-703 is disordered; it reads DKWIGHTPSSATPADEEDLTPIGGVDD. Acidic residues predominate over residues 690–703; the sequence is ADEEDLTPIGGVDD. A helical transmembrane segment spans residues 750-770; it reads VPLYFYGLLFALGWNEILAVL. Residues 771–773 lie on the Lumenal side of the membrane; the sequence is RNP. A helical transmembrane segment spans residues 774-794; the sequence is VYFLLLFVCAIGAYITYQLNL. Residues 795 to 873 are Cytoplasmic-facing; the sequence is WGPIIKMTEA…EDVDDDDDDF (79 aa). The disordered stretch occupies residues 828 to 873; that stretch reads RQAMAMSGARNATEEHEMSRLSRKPAERGGRKNRADEDVDDDDDDF. Residues 839-863 show a composition bias toward basic and acidic residues; sequence ATEEHEMSRLSRKPAERGGRKNRAD. Residues 864 to 873 are compositionally biased toward acidic residues; sequence EDVDDDDDDF.

Belongs to the TRAFAC class dynamin-like GTPase superfamily. GB1/RHD3 GTPase family. RHD3 subfamily.

It is found in the endoplasmic reticulum membrane. Functionally, cooperates with the reticulon proteins and tubule-shaping DP1 family proteins to generate and maintain the structure of the tubular endoplasmic reticulum network. Has GTPase activity, which is required for its function in ER organization. This Ajellomyces capsulatus (strain NAm1 / WU24) (Darling's disease fungus) protein is Protein SEY1.